Reading from the N-terminus, the 562-residue chain is Protein TBF1 (562 aa).

Residues 376–414 (ASMSNSSSGPHSSHNNSSNSNNNGSIGLRKPKAKRTWSK) are disordered. Residues 377-400 (SMSNSSSGPHSSHNNSSNSNNNGS) show a composition bias toward low complexity. Residues 404 to 460 (RKPKAKRTWSKEEEEALVEGLKEVGPSWSKILDLYGPGGKITENLKNRTQVQLKDKA) enclose the HTH myb-type domain. Residues 431–456 (WSKILDLYGPGGKITENLKNRTQVQL) constitute a DNA-binding region (H-T-H motif). Residues 495-562 (FSQSPNSSTI…GFDPHLEDGM (68 aa)) are disordered. Composition is skewed to polar residues over residues 496 to 522 (SQSP…ATED) and 532 to 552 (GQNS…SDNT).

Homodimer.

Its subcellular location is the nucleus. The protein resides in the chromosome. It localises to the telomere. Its function is as follows. Binds the telomeric double-stranded TTAGGG repeat and negatively regulates telomere length. Involved in the regulation of gene expression. 52 binding sites have been identified, distributed over 15 chromosomes. A member of the general regulatory factors (GRFs) which act as genome partitioners. Acts as a chromatin insulator which are known as STARs (Subtelomeric anti-silencing region). STARs prevent negative or positive transcription influence by extending across chromatin to a promoter. In Saccharomyces cerevisiae (strain ATCC 204508 / S288c) (Baker's yeast), this protein is Protein TBF1 (TBF1).